A 343-amino-acid chain; its full sequence is Zinc finger protein STP3 (343 aa).

2 disordered regions span residues 31–56 (YNGE…SGSA) and 71–140 (SNDV…KPRK). A compositionally biased stretch (polar residues) spans 33 to 45 (GEASSASTHPTLP). 3 stretches are compositionally biased toward low complexity: residues 46-56 (NMNISNGSGSA), 71-86 (SNDV…FLPS), and 94-120 (SASA…AGPS). Ser71 and Ser111 each carry phosphoserine. A C2H2-type zinc finger spans residues 169–191 (HKCPICHRGFARNNDLLRHKKRH). The disordered stretch occupies residues 198–222 (SQSGVLSNHNDGKGGSVSPNDDDTH).

Its subcellular location is the nucleus. This Saccharomyces cerevisiae (strain ATCC 204508 / S288c) (Baker's yeast) protein is Zinc finger protein STP3 (STP3).